Here is a 140-residue protein sequence, read N- to C-terminus: MAVQRTFSILKPDATERNITGAINALIEKAGLRIVAQKRIHMTRGQAETFYAVHKERPFFGELVDFMTSGPVVVQVLEGEGAIAKYRDVMGATDPSKAADGTIRKLHAKSIGENSVHGSDAPETAAIEIAQFFAGNEIVG.

Residues Lys-11, Phe-59, Arg-87, Thr-93, Arg-104, and Asn-114 each coordinate ATP. His-117 serves as the catalytic Pros-phosphohistidine intermediate.

It belongs to the NDK family. Homotetramer. The cofactor is Mg(2+).

The protein localises to the cytoplasm. The enzyme catalyses a 2'-deoxyribonucleoside 5'-diphosphate + ATP = a 2'-deoxyribonucleoside 5'-triphosphate + ADP. It carries out the reaction a ribonucleoside 5'-diphosphate + ATP = a ribonucleoside 5'-triphosphate + ADP. Major role in the synthesis of nucleoside triphosphates other than ATP. The ATP gamma phosphate is transferred to the NDP beta phosphate via a ping-pong mechanism, using a phosphorylated active-site intermediate. This chain is Nucleoside diphosphate kinase, found in Rhodopseudomonas palustris (strain HaA2).